The sequence spans 174 residues: uncharacterized protein (174 aa).

The next 2 membrane-spanning stretches (helical) occupy residues 8–28 (FLFI…NYVF) and 146–166 (IVSW…IQFI).

It is found in the cell membrane. This is an uncharacterized protein from Haemophilus influenzae (strain ATCC 51907 / DSM 11121 / KW20 / Rd).